A 214-amino-acid chain; its full sequence is Probable GTP-binding protein EngB (214 aa).

The 176-residue stretch at 24-199 (GGYEVAFAGR…RGIVGGWLGL (176 aa)) folds into the EngB-type G domain. GTP contacts are provided by residues 32 to 39 (GRSNAGKS), 59 to 63 (GRTQQ), 77 to 80 (DLPG), 144 to 147 (TKAD), and 178 to 180 (YSG). Residues Ser39 and Thr61 each contribute to the Mg(2+) site.

This sequence belongs to the TRAFAC class TrmE-Era-EngA-EngB-Septin-like GTPase superfamily. EngB GTPase family. It depends on Mg(2+) as a cofactor.

In terms of biological role, necessary for normal cell division and for the maintenance of normal septation. In Xanthomonas axonopodis pv. citri (strain 306), this protein is Probable GTP-binding protein EngB.